A 210-amino-acid polypeptide reads, in one-letter code: Beta-crystallin A4 (210 aa).

The tract at residues 1–25 (MSGMFSGSISETSGMSLQCTKSAGH) is N-terminal arm. Beta/gamma crystallin 'Greek key' domains are found at residues 26–65 (WKIVVWDEEGFQGRRHEFTAECPSVLELGFETVRSLKVLS) and 66–112 (GAWV…RPVA). Positions 113–118 (CANHRD) are connecting peptide. Beta/gamma crystallin 'Greek key' domains are found at residues 119–160 (SRLT…HVHS) and 161–209 (GAWV…RRIQ).

It belongs to the beta/gamma-crystallin family. As to quaternary structure, homo/heterodimer, or complexes of higher-order. The structure of beta-crystallin oligomers seems to be stabilized through interactions between the N-terminal arms.

Its function is as follows. Crystallins are the dominant structural components of the vertebrate eye lens. The sequence is that of Beta-crystallin A4 (CRYBA4) from Bos taurus (Bovine).